Consider the following 168-residue polypeptide: Cell division inhibitor SulA (168 aa).

The tract at residues 106–112 (ALLTGNY) is ftsZ binding. The interval 161–168 (KIHSSLYH) is lon protease binding.

It belongs to the SulA family. In terms of assembly, interacts with FtsZ. In terms of processing, is rapidly cleaved and degraded by the Lon protease once DNA damage is repaired.

Its function is as follows. Component of the SOS system and an inhibitor of cell division. Accumulation of SulA causes rapid cessation of cell division and the appearance of long, non-septate filaments. In the presence of GTP, binds a polymerization-competent form of FtsZ in a 1:1 ratio, thus inhibiting FtsZ polymerization and therefore preventing it from participating in the assembly of the Z ring. This mechanism prevents the premature segregation of damaged DNA to daughter cells during cell division. In Serratia proteamaculans (strain 568), this protein is Cell division inhibitor SulA.